The chain runs to 308 residues: Glutaminase (308 aa).

Substrate-binding residues include Ser-66, Asn-117, Glu-161, Asn-168, Tyr-192, Tyr-244, and Val-262.

It belongs to the glutaminase family. Homotetramer.

It catalyses the reaction L-glutamine + H2O = L-glutamate + NH4(+). In Salmonella choleraesuis (strain SC-B67), this protein is Glutaminase.